An 85-amino-acid chain; its full sequence is U4-theraphotoxin-Hhn1f (85 aa).

A signal peptide spans 1 to 22 (MKVTLIAILTCAAVLVLHTTAA). Positions 23–48 (EELEAESQLMEVGMPDTELAAVDEER) are excised as a propeptide. Cys71 and Cys82 form a disulfide bridge.

The protein belongs to the neurotoxin 12 (Hwtx-2) family. 02 (Hwtx-2) subfamily. Expressed by the venom gland.

Its subcellular location is the secreted. In terms of biological role, postsynaptic neurotoxin. The polypeptide is U4-theraphotoxin-Hhn1f (Cyriopagopus hainanus (Chinese bird spider)).